The primary structure comprises 118 residues: NADH-quinone oxidoreductase subunit A (118 aa).

A run of 3 helical transmembrane segments spans residues Tyr-5–Leu-25, Leu-62–Val-82, and Leu-87–Val-107.

Belongs to the complex I subunit 3 family. As to quaternary structure, NDH-1 is composed of 14 different subunits. Subunits NuoA, H, J, K, L, M, N constitute the membrane sector of the complex.

It is found in the cell membrane. It catalyses the reaction a quinone + NADH + 5 H(+)(in) = a quinol + NAD(+) + 4 H(+)(out). In terms of biological role, NDH-1 shuttles electrons from NADH, via FMN and iron-sulfur (Fe-S) centers, to quinones in the respiratory chain. The immediate electron acceptor for the enzyme in this species is believed to be ubiquinone. Couples the redox reaction to proton translocation (for every two electrons transferred, four hydrogen ions are translocated across the cytoplasmic membrane), and thus conserves the redox energy in a proton gradient. The polypeptide is NADH-quinone oxidoreductase subunit A (Herpetosiphon aurantiacus (strain ATCC 23779 / DSM 785 / 114-95)).